Consider the following 309-residue polypeptide: Homoserine O-succinyltransferase (309 aa).

The active-site Acyl-thioester intermediate is the cysteine 142. Residues lysine 163 and serine 192 each contribute to the substrate site. The Proton acceptor role is filled by histidine 235. Residue glutamate 237 is part of the active site. Arginine 249 lines the substrate pocket.

This sequence belongs to the MetA family.

It is found in the cytoplasm. It catalyses the reaction L-homoserine + succinyl-CoA = O-succinyl-L-homoserine + CoA. Its pathway is amino-acid biosynthesis; L-methionine biosynthesis via de novo pathway; O-succinyl-L-homoserine from L-homoserine: step 1/1. Its function is as follows. Transfers a succinyl group from succinyl-CoA to L-homoserine, forming succinyl-L-homoserine. This is Homoserine O-succinyltransferase from Klebsiella pneumoniae (strain 342).